A 1385-amino-acid chain; its full sequence is DNA-directed RNA polymerase subunit beta' (1385 aa).

The Zn(2+) site is built by Cys-72, Cys-74, Cys-87, and Cys-90. The Mg(2+) site is built by Asp-463, Asp-465, and Asp-467. The Zn(2+) site is built by Cys-813, Cys-887, Cys-894, and Cys-897.

It belongs to the RNA polymerase beta' chain family. As to quaternary structure, the RNAP catalytic core consists of 2 alpha, 1 beta, 1 beta' and 1 omega subunit. When a sigma factor is associated with the core the holoenzyme is formed, which can initiate transcription. Mg(2+) serves as cofactor. It depends on Zn(2+) as a cofactor.

The enzyme catalyses RNA(n) + a ribonucleoside 5'-triphosphate = RNA(n+1) + diphosphate. Its function is as follows. DNA-dependent RNA polymerase catalyzes the transcription of DNA into RNA using the four ribonucleoside triphosphates as substrates. This is DNA-directed RNA polymerase subunit beta' from Trichlorobacter lovleyi (strain ATCC BAA-1151 / DSM 17278 / SZ) (Geobacter lovleyi).